A 166-amino-acid chain; its full sequence is MSQTPREATPAQQSRRAARELAVQGLYQWQMTGKSITAVESEFRAQIADEDLEDHENWHKVMGIADLALFHELLHNVAADREAIDKTIAPLLDRRLEDLDRIELAILRLGAYELKYRLEVPYRAVINEGIELAKAFGATDGHKYVNGILDKLASRLRSAEVAARRR.

It belongs to the NusB family.

Functionally, involved in transcription antitermination. Required for transcription of ribosomal RNA (rRNA) genes. Binds specifically to the boxA antiterminator sequence of the ribosomal RNA (rrn) operons. This Chromohalobacter salexigens (strain ATCC BAA-138 / DSM 3043 / CIP 106854 / NCIMB 13768 / 1H11) protein is Transcription antitermination protein NusB.